The sequence spans 123 residues: Large ribosomal subunit protein bL12 (123 aa).

It belongs to the bacterial ribosomal protein bL12 family. In terms of assembly, homodimer. Part of the ribosomal stalk of the 50S ribosomal subunit. Forms a multimeric L10(L12)X complex, where L10 forms an elongated spine to which 2 to 4 L12 dimers bind in a sequential fashion. Binds GTP-bound translation factors.

Its function is as follows. Forms part of the ribosomal stalk which helps the ribosome interact with GTP-bound translation factors. Is thus essential for accurate translation. This Photorhabdus laumondii subsp. laumondii (strain DSM 15139 / CIP 105565 / TT01) (Photorhabdus luminescens subsp. laumondii) protein is Large ribosomal subunit protein bL12.